The following is a 485-amino-acid chain: Glucagon receptor (485 aa).

The signal sequence occupies residues 1–26 (MPLTQLHCPHLLLLLLVLSCLPEAPS). The Extracellular portion of the chain corresponds to 27-137 (AQVMDFLFEK…EIEVQKGVAK (111 aa)). 3 disulfides stabilise this stretch: Cys-44/Cys-68, Cys-59/Cys-101, and Cys-82/Cys-122. Residues Asn-47, Asn-60, Asn-75, Asn-79, and Asn-118 are each glycosylated (N-linked (GlcNAc...) asparagine). A helical membrane pass occupies residues 138-162 (MYSSQQVMYTVGYSLSLGALLLALV). The Cytoplasmic portion of the chain corresponds to 163–174 (ILLGLRKLHCTR). Residues 175 to 199 (NYIHGNLFASFVLKAGSVLVIDWLL) traverse the membrane as a helical segment. Over 200-226 (KTRYSQKIGDDLSVSVWLSDGAMAGCR) the chain is Extracellular. A disulfide bond links Cys-225 and Cys-295. The helical transmembrane segment at 227–250 (VATVIMQYGIIANYCWLLVEGVYL) threads the bilayer. Over 251–264 (YSLLSLATFSERSF) the chain is Cytoplasmic. A helical transmembrane segment spans residues 265-286 (FSLYLGIGWGAPLLFVIPWVVV). Residues 287–304 (KCLFENVQCWTSNDNMGF) are Extracellular-facing. The helical transmembrane segment at 305–327 (WWILRIPVFLALLINFFIFVHII) threads the bilayer. Over 328–351 (HLLVAKLRAHQMHYADYKFRLARS) the chain is Cytoplasmic. Residues 351 to 354 (STLT) form an important for allosteric inhibitor binding region. The chain crosses the membrane as a helical span at residues 352–370 (TLTLIPLLGVHEVVFAFVT). Residues 371-382 (DEHAQGTLRSTK) are Extracellular-facing. The helical transmembrane segment at 383-403 (LFFDLFLSSFQGLLVAVLYCF) threads the bilayer. Residues 404-485 (LNKEVQAELM…SLPRLADSPT (82 aa)) are Cytoplasmic-facing. Polar residues predominate over residues 457 to 475 (AGSSSGTGCVPSMETSLAS). The interval 457 to 485 (AGSSSGTGCVPSMETSLASSLPRLADSPT) is disordered. Residues Ser-460 and Ser-476 each carry the phosphoserine modification.

The protein belongs to the G-protein coupled receptor 2 family. Ligand-binding promotes phosphorylation of serine residues in the C-terminal cytoplasmic domain. Phosphorylation is important for receptor endocytosis after ligand-binding. In terms of tissue distribution, expressed predominantly in liver, kidney, adrenal, lung and stomach, while lower levels of expression are detected in brown and white adipose tissue, cerebellum, duodenum and heart.

It is found in the cell membrane. In terms of biological role, G-protein coupled receptor for glucagon that plays a central role in the regulation of blood glucose levels and glucose homeostasis. Regulates the rate of hepatic glucose production by promoting glycogen hydrolysis and gluconeogenesis. Plays an important role in mediating the responses to fasting. Ligand binding causes a conformation change that triggers signaling via guanine nucleotide-binding proteins (G proteins) and modulates the activity of down-stream effectors, such as adenylate cyclase. Promotes activation of adenylate cyclase. Besides, plays a role in signaling via a phosphatidylinositol-calcium second messenger system. The polypeptide is Glucagon receptor (Gcgr) (Mus musculus (Mouse)).